A 649-amino-acid polypeptide reads, in one-letter code: Acetyl-coenzyme A synthetase (649 aa).

CoA contacts are provided by residues Arg191 to Arg194, Thr309, and Asn333. Residues Gly385–Pro387, Asp409–Thr414, Asp498, and Arg513 contribute to the ATP site. Residue Ser521 participates in CoA binding. An ATP-binding site is contributed by Arg524. Residues Val535, His537, and Val540 each contribute to the Mg(2+) site. Position 582 (Arg582) interacts with CoA. Lys607 carries the post-translational modification N6-acetyllysine.

Belongs to the ATP-dependent AMP-binding enzyme family. Mg(2+) is required as a cofactor. Acetylated. Deacetylation by the SIR2-homolog deacetylase activates the enzyme.

The catalysed reaction is acetate + ATP + CoA = acetyl-CoA + AMP + diphosphate. In terms of biological role, catalyzes the conversion of acetate into acetyl-CoA (AcCoA), an essential intermediate at the junction of anabolic and catabolic pathways. AcsA undergoes a two-step reaction. In the first half reaction, AcsA combines acetate with ATP to form acetyl-adenylate (AcAMP) intermediate. In the second half reaction, it can then transfer the acetyl group from AcAMP to the sulfhydryl group of CoA, forming the product AcCoA. This chain is Acetyl-coenzyme A synthetase, found in Novosphingobium aromaticivorans (strain ATCC 700278 / DSM 12444 / CCUG 56034 / CIP 105152 / NBRC 16084 / F199).